Here is a 362-residue protein sequence, read N- to C-terminus: L-arginine:L-lysine amidinotransferase (362 aa).

Catalysis depends on residues Asp-195 and His-244. The active-site Amidino-cysteine intermediate is the Cys-346.

The protein belongs to the amidinotransferase family.

The catalysed reaction is L-lysine + L-arginine = L-homoarginine + L-ornithine. It carries out the reaction L-canavanine + L-ornithine = L-canaline + L-arginine + H(+). In terms of biological role, involved in the biosynthesis of phaseolotoxin, a nonhost-specific toxin which is a key component in the development of the halo blight disease of beans. Catalyzes the transfer of an amidino group from arginine to lysine to produce one molecule of homoarginine and one molecule of ornithine, both being precursors in the biosynthesis of phaseolotoxin. Can also use L-canavanine as an alternative amidine donor with L-ornithine as amidine acceptor. The polypeptide is L-arginine:L-lysine amidinotransferase (Pseudomonas savastanoi pv. phaseolicola (Pseudomonas syringae pv. phaseolicola)).